The sequence spans 340 residues: Extracellular matrix protein-binding protein emp (340 aa).

An N-terminal signal peptide occupies residues 1-26; the sequence is MKKKLLVLTMSTLFATQIMNSNHAKA.

The protein resides in the cell surface. Its function is as follows. Adhesin that binds to the host cell extracellular matrix proteins fibronectin, fibrinogen, collagen, and vitronectin. The protein is Extracellular matrix protein-binding protein emp (emp) of Staphylococcus aureus (strain USA300).